We begin with the raw amino-acid sequence, 307 residues long: MIQSHVPVMLNEMLEALSPKDGESYLDCTFGAGGYSKAILESCNCYVTALDRDPNVIKRAEEIQQNYGERFDFVETNFADSFAKLKEKKFDGIVLDLGVSSMQLDIADRGFSFLHDGPLDMRMSGQGLSAEEFVNTAEEKELADVIYKYGDESFSRRIAKRIVEYRKTARIDSTGKLAEIVRSSIGFRKGKIDPATKTFQAIRIYVNDELGELEQFLVNVKNILKKDGRLVVVSFHSLEDRIVKNFFKENSEKPVVRSKYAKDDMTIDPNKWLKIITNKALASSDKEVGLNIRARSAKLRAAKAIYE.

S-adenosyl-L-methionine-binding positions include 33-35 (GGY), aspartate 51, phenylalanine 82, aspartate 96, and glutamine 103.

The protein belongs to the methyltransferase superfamily. RsmH family.

It is found in the cytoplasm. The catalysed reaction is cytidine(1402) in 16S rRNA + S-adenosyl-L-methionine = N(4)-methylcytidine(1402) in 16S rRNA + S-adenosyl-L-homocysteine + H(+). Specifically methylates the N4 position of cytidine in position 1402 (C1402) of 16S rRNA. This is Ribosomal RNA small subunit methyltransferase H from Rickettsia massiliae (strain Mtu5).